A 460-amino-acid polypeptide reads, in one-letter code: Methylenetetrahydrofolate--tRNA-(uracil-5-)-methyltransferase TrmFO (460 aa).

Residue 12–17 (GGGLAG) coordinates FAD.

Belongs to the MnmG family. TrmFO subfamily. It depends on FAD as a cofactor.

Its subcellular location is the cytoplasm. The catalysed reaction is uridine(54) in tRNA + (6R)-5,10-methylene-5,6,7,8-tetrahydrofolate + NADH + H(+) = 5-methyluridine(54) in tRNA + (6S)-5,6,7,8-tetrahydrofolate + NAD(+). It catalyses the reaction uridine(54) in tRNA + (6R)-5,10-methylene-5,6,7,8-tetrahydrofolate + NADPH + H(+) = 5-methyluridine(54) in tRNA + (6S)-5,6,7,8-tetrahydrofolate + NADP(+). Its function is as follows. Catalyzes the folate-dependent formation of 5-methyl-uridine at position 54 (M-5-U54) in all tRNAs. In Crocosphaera subtropica (strain ATCC 51142 / BH68) (Cyanothece sp. (strain ATCC 51142)), this protein is Methylenetetrahydrofolate--tRNA-(uracil-5-)-methyltransferase TrmFO.